Consider the following 479-residue polypeptide: Membrane-bound lytic murein transglycosylase F (479 aa).

The N-terminal stretch at 1-18 is a signal peptide; that stretch reads MKGLFIRIVLAICLSLWA. Positions 19–266 are non-LT domain; that stretch reads IDMVFPWQQI…RIEEKYFNHL (248 aa). Positions 267-479 are LT domain; it reads NQFDYVDTRS…ISTQTQQEQR (213 aa). Glutamate 311 is a catalytic residue.

This sequence in the N-terminal section; belongs to the bacterial solute-binding protein 3 family. In the C-terminal section; belongs to the transglycosylase Slt family.

The protein localises to the cell outer membrane. It catalyses the reaction Exolytic cleavage of the (1-&gt;4)-beta-glycosidic linkage between N-acetylmuramic acid (MurNAc) and N-acetylglucosamine (GlcNAc) residues in peptidoglycan, from either the reducing or the non-reducing ends of the peptidoglycan chains, with concomitant formation of a 1,6-anhydrobond in the MurNAc residue.. In terms of biological role, murein-degrading enzyme that degrades murein glycan strands and insoluble, high-molecular weight murein sacculi, with the concomitant formation of a 1,6-anhydromuramoyl product. Lytic transglycosylases (LTs) play an integral role in the metabolism of the peptidoglycan (PG) sacculus. Their lytic action creates space within the PG sacculus to allow for its expansion as well as for the insertion of various structures such as secretion systems and flagella. The polypeptide is Membrane-bound lytic murein transglycosylase F (Histophilus somni (strain 2336) (Haemophilus somnus)).